The chain runs to 263 residues: Putative S-adenosyl-L-methionine-dependent methyltransferase Mkms_0098 (263 aa).

S-adenosyl-L-methionine is bound by residues Asp121 and 150–151; that span reads ES.

Belongs to the UPF0677 family.

Functionally, exhibits S-adenosyl-L-methionine-dependent methyltransferase activity. This is Putative S-adenosyl-L-methionine-dependent methyltransferase Mkms_0098 from Mycobacterium sp. (strain KMS).